The primary structure comprises 694 residues: LMBR1 domain-containing protein 2 homolog (694 aa).

Topologically, residues 1–3 are extracellular; the sequence is MAY. Residues 4–26 form a helical membrane-spanning segment; it reads LLSFGIVAALFLASISLYRYGNI. Residues 27–30 are Cytoplasmic-facing; that stretch reads PRQH. The chain crosses the membrane as a helical span at residues 31 to 51; it reads ILVTLSVLTAWCFSFLIVFTI. Residues 52-106 are Extracellular-facing; it reads PLDVTSTLYRQCVEEHRPTPAPNVTNTSSATVGPPPQCQEPWGMVPASVFPNLWR. Asparagine 74 and asparagine 77 each carry an N-linked (GlcNAc...) asparagine glycan. The helical transmembrane segment at 107–127 threads the bilayer; that stretch reads IIYWSSQFLTWLIMPLMQSYL. Over 128-144 the chain is Cytoplasmic; that stretch reads KAGDFTVKGKLKSALIE. Residues 145–165 form a helical membrane-spanning segment; the sequence is NAIYYGSYLFICGVLLIYIAV. Topologically, residues 166 to 181 are extracellular; sequence KGESLDWQKLKAIASS. Residues 182–202 form a helical membrane-spanning segment; it reads ASNTWGLFLLILLLGYALVEV. The Cytoplasmic segment spans residues 203–381; the sequence is PRSLWNNAKP…ECLLKAPFLK (179 aa). Residues 222 to 249 are a coiled coil; the sequence is KAAKLSTEKAEAEEHVDDILESLQGLSR. Residues 382 to 402 form a helical membrane-spanning segment; that stretch reads TMCVLTATMSAMVVWSELTFF. Residues 403–426 lie on the Extracellular side of the membrane; the sequence is SRHPVLSIFANVIYVAKESYDFFT. The helical transmembrane segment at 427-447 threads the bilayer; sequence IEVFSMVVLCYFFYCTYSTIL. Residues 448 to 467 are Cytoplasmic-facing; it reads RIRFLNLYYLAPHHQTNEHS. Residues 468 to 488 traverse the membrane as a helical segment; sequence LIFSGMLLCRLTPPMCLNFLG. Topologically, residues 489–514 are extracellular; sequence LIHMDTHIIPNRIMETVYTQIMGHMD. A helical membrane pass occupies residues 515–535; that stretch reads VIGIISNGFNIYFPMCMLAFC. The Cytoplasmic segment spans residues 536–694; it reads LATWFSLGSR…PPPRGLFDDV (159 aa). A coiled-coil region spans residues 564 to 592; that stretch reads ELVQEGKDLIAREKRRRQRAEEAMARRRD. The interval 673–694 is disordered; that stretch reads DYEAETDGRIVGPPPRGLFDDV.

The protein belongs to the LIMR family.

The protein localises to the membrane. This Drosophila melanogaster (Fruit fly) protein is LMBR1 domain-containing protein 2 homolog.